The sequence spans 231 residues: Floral homeotic protein PMADS 1 (231 aa).

The region spanning 3–58 is the MADS-box domain; that stretch reads RGKIQIKRIENQTNRQVTYSKRRNGLFKKANELTVLCDAKVSIIMISSTGKLHEFI. Residues 84–174 form the K-box domain; sequence YEKMQEQLRK…LLEFDARQED (91 aa).

Predominantly expressed in petals and stamens, less in carpels and sepals.

The protein localises to the nucleus. Its function is as follows. Transcription factor involved in the genetic control of flower development. Necessary for the normal development of petals. Absence of the PMADS1 protein causes transformation of petals into sepals. The protein is Floral homeotic protein PMADS 1 (PMADS1) of Petunia hybrida (Petunia).